Consider the following 617-residue polypeptide: Formin-binding protein 1 (617 aa).

The interval 1 to 79 is required for self-association and induction of membrane tubulation; the sequence is MSWGTELWDQ…CKAFISNLNE (79 aa). Residues 1–264 enclose the F-BAR domain; it reads MSWGTELWDQ…AAESIDQKND (264 aa). The tract at residues 1–335 is interaction with microtubules; the sequence is MSWGTELWDQ…KKNKLMSLLT (335 aa). K66 and K110 each carry N6-acetyllysine. Residues 67-259 adopt a coiled-coil conformation; sequence YTSCKAFISN…DGIVKAAESI (193 aa). Residues 251–617 form a required for self-association and induction of membrane tubulation region; that stretch reads GIVKAAESID…VCLDKNAKDS (367 aa). 2 disordered regions span residues 280-315 and 333-366; these read GDIE…KFGG and LLTS…QKEP. Phosphoserine occurs at positions 296 and 299. Positions 338-347 are enriched in pro residues; that stretch reads HQPPPPPPAS. A phosphoserine mark is found at S349 and S359. Positions 398-490 form a coiled coil; it reads TPEDFSNLPP…EVEGRLPARS (93 aa). The tract at residues 400–552 is interaction with RND2; that stretch reads EDFSNLPPEQ…FDDEEPLPAI (153 aa). An REM-1 domain is found at 404-481; it reads NLPPEQRRKK…TQKFEAWLAE (78 aa). The segment at 486 to 531 is disordered; the sequence is LPARSEQARRQSGLYDSQNPPTVNNCAQDRESPDGSYTEEQSQESE. The tract at residues 495–617 is interaction with PDE6G; the sequence is RQSGLYDSQN…VCLDKNAKDS (123 aa). S497 carries the post-translational modification Phosphoserine. Over residues 499–512 the composition is skewed to polar residues; it reads LYDSQNPPTVNNCA. Y500 bears the Phosphotyrosine mark. The segment at 514 to 617 is required for interaction with TNKS; that stretch reads DRESPDGSYT…VCLDKNAKDS (104 aa). S521 bears the Phosphoserine mark. The segment at 535 to 617 is interaction with DNM1 and DNM3; it reads LATDFDDEFD…VCLDKNAKDS (83 aa). Residues 550 to 611 form the SH3 domain; it reads PAIGTCKALY…PTSYVEVCLD (62 aa). An interaction with ARHGAP17, DAAM1, DIAPH1 and DIAPH2 region spans residues 550–617; that stretch reads PAIGTCKALY…VCLDKNAKDS (68 aa). Residues 553–609 are interaction with DNM2 and WASL; the sequence is GTCKALYTFEGQNEGTISVVEGETLYVIEEDKGDGWTRIRRNEDEEGYVPTSYVEVC. Positions 553–610 are interaction with FASLG; that stretch reads GTCKALYTFEGQNEGTISVVEGETLYVIEEDKGDGWTRIRRNEDEEGYVPTSYVEVCL.

This sequence belongs to the FNBP1 family. As to quaternary structure, interacts specifically with GTP-bound RND2 and CDC42. Interacts with PDE6G and microtubules. Homodimerizes, the dimers can polymerize end-to-end to form filamentous structures. Interacts with AKAP9, ARHGAP17, DAAM1, DIAPH1, DIAPH2, DNM1, DNM2, DNM3, FASLG/FASL, SNX2 and WASL/N-WASP. May interact with TNKS. Very highly expressed in the epithelial cells of the gastrointestinal tract, respiratory, reproductive and urinary systems. Also highly expressed in brown adipose tissue, cardiomyocytes, enteric ganglia and glucagon producing cells of the pancreas. Expressed in germ cells of the testis and all regions of the brain.

The protein resides in the cytoplasm. It localises to the cytoskeleton. Its subcellular location is the cell cortex. The protein localises to the lysosome. It is found in the cytoplasmic vesicle. The protein resides in the cell membrane. It localises to the membrane. Its subcellular location is the clathrin-coated pit. May act as a link between RND2 signaling and regulation of the actin cytoskeleton. Required to coordinate membrane tubulation with reorganization of the actin cytoskeleton during the late stage of clathrin-mediated endocytosis. Binds to lipids such as phosphatidylinositol 4,5-bisphosphate and phosphatidylserine and promotes membrane invagination and the formation of tubules. Also enhances actin polymerization via the recruitment of WASL/N-WASP, which in turn activates the Arp2/3 complex. Actin polymerization may promote the fission of membrane tubules to form endocytic vesicles. May be required for the lysosomal retention of FASLG/FASL. This chain is Formin-binding protein 1 (FNBP1), found in Homo sapiens (Human).